The following is a 376-amino-acid chain: Cobalt-precorrin-5B C(1)-methyltransferase (376 aa).

Residues 353-376 (KGRTTSTPSHQPAPSSFGDRNRRT) are disordered. Polar residues predominate over residues 355 to 366 (RTTSTPSHQPAP).

This sequence belongs to the CbiD family.

It catalyses the reaction Co-precorrin-5B + S-adenosyl-L-methionine = Co-precorrin-6A + S-adenosyl-L-homocysteine. Its pathway is cofactor biosynthesis; adenosylcobalamin biosynthesis; cob(II)yrinate a,c-diamide from sirohydrochlorin (anaerobic route): step 6/10. Catalyzes the methylation of C-1 in cobalt-precorrin-5B to form cobalt-precorrin-6A. The sequence is that of Cobalt-precorrin-5B C(1)-methyltransferase from Agrobacterium fabrum (strain C58 / ATCC 33970) (Agrobacterium tumefaciens (strain C58)).